We begin with the raw amino-acid sequence, 372 residues long: 4-hydroxy-3-methylbut-2-en-1-yl diphosphate synthase (flavodoxin) (372 aa).

Residues Cys270, Cys273, Cys305, and Glu312 each contribute to the [4Fe-4S] cluster site.

It belongs to the IspG family. [4Fe-4S] cluster is required as a cofactor.

The catalysed reaction is (2E)-4-hydroxy-3-methylbut-2-enyl diphosphate + oxidized [flavodoxin] + H2O + 2 H(+) = 2-C-methyl-D-erythritol 2,4-cyclic diphosphate + reduced [flavodoxin]. It functions in the pathway isoprenoid biosynthesis; isopentenyl diphosphate biosynthesis via DXP pathway; isopentenyl diphosphate from 1-deoxy-D-xylulose 5-phosphate: step 5/6. Functionally, converts 2C-methyl-D-erythritol 2,4-cyclodiphosphate (ME-2,4cPP) into 1-hydroxy-2-methyl-2-(E)-butenyl 4-diphosphate. The protein is 4-hydroxy-3-methylbut-2-en-1-yl diphosphate synthase (flavodoxin) of Escherichia coli O9:H4 (strain HS).